The following is a 132-amino-acid chain: Fatty acid-binding protein type 3 (132 aa).

It belongs to the calycin superfamily. Fatty-acid binding protein (FABP) family.

This is Fatty acid-binding protein type 3 from Fasciola hepatica (Liver fluke).